A 332-amino-acid chain; its full sequence is Ribosomal RNA small subunit methyltransferase C (332 aa).

Belongs to the methyltransferase superfamily. RsmC family. As to quaternary structure, monomer.

It is found in the cytoplasm. The catalysed reaction is guanosine(1207) in 16S rRNA + S-adenosyl-L-methionine = N(2)-methylguanosine(1207) in 16S rRNA + S-adenosyl-L-homocysteine + H(+). Specifically methylates the guanine in position 1207 of 16S rRNA in the 30S particle. This is Ribosomal RNA small subunit methyltransferase C from Pseudomonas syringae pv. tomato (strain ATCC BAA-871 / DC3000).